We begin with the raw amino-acid sequence, 166 residues long: NADH-quinone oxidoreductase subunit I (166 aa).

4Fe-4S ferredoxin-type domains are found at residues 57-87 (LRRYPNGEERCIACKLCEAVCPALAITIESE) and 97-126 (TRYDIDMFKCINCGLCEESCPVDSIVVTPI). Positions 67, 70, 73, 77, 106, 109, 112, and 116 each coordinate [4Fe-4S] cluster.

It belongs to the complex I 23 kDa subunit family. As to quaternary structure, NDH-1 is composed of 14 different subunits. Subunits NuoA, H, J, K, L, M, N constitute the membrane sector of the complex. It depends on [4Fe-4S] cluster as a cofactor.

It localises to the cell inner membrane. The catalysed reaction is a quinone + NADH + 5 H(+)(in) = a quinol + NAD(+) + 4 H(+)(out). Functionally, NDH-1 shuttles electrons from NADH, via FMN and iron-sulfur (Fe-S) centers, to quinones in the respiratory chain. The immediate electron acceptor for the enzyme in this species is believed to be ubiquinone. Couples the redox reaction to proton translocation (for every two electrons transferred, four hydrogen ions are translocated across the cytoplasmic membrane), and thus conserves the redox energy in a proton gradient. The polypeptide is NADH-quinone oxidoreductase subunit I (Legionella pneumophila (strain Paris)).